The sequence spans 346 residues: uncharacterized protein (346 aa).

The protein belongs to the IIV-6 359L family.

This is an uncharacterized protein from Invertebrate iridescent virus 6 (IIV-6).